The sequence spans 248 residues: 3-deoxy-manno-octulosonate cytidylyltransferase (248 aa).

It belongs to the KdsB family.

It localises to the cytoplasm. It catalyses the reaction 3-deoxy-alpha-D-manno-oct-2-ulosonate + CTP = CMP-3-deoxy-beta-D-manno-octulosonate + diphosphate. It functions in the pathway nucleotide-sugar biosynthesis; CMP-3-deoxy-D-manno-octulosonate biosynthesis; CMP-3-deoxy-D-manno-octulosonate from 3-deoxy-D-manno-octulosonate and CTP: step 1/1. It participates in bacterial outer membrane biogenesis; lipopolysaccharide biosynthesis. Its function is as follows. Activates KDO (a required 8-carbon sugar) for incorporation into bacterial lipopolysaccharide in Gram-negative bacteria. In Shigella dysenteriae serotype 1 (strain Sd197), this protein is 3-deoxy-manno-octulosonate cytidylyltransferase.